Consider the following 662-residue polypeptide: MYLAILALPMFGSAVAGLRGRTIGVTGAHIITTGCLMTSAALSIVAFYEVGLSGSPVSIVIGSWIDSEFMLVQWGFLFDSLTVSMLLPVLIVSSLVHLYSISYMAGDPHNQRFFSYLSMFTFFMLVLVAGDNYFIMFVGWEGIGISSYLLINFWYTRMQANKAGMKALTVNRVGDMFLSVGFFAIFWVFGNVDYASVFSVAPYINETAITIIGLLLLVGAMAKSANIPLHTWLPDAMEGPTPVSALIHAATLVTAGVYLMLRSSPIIEYGPTVLVVITWVGALTAFFAATTGLLQNDLKRVIAYSTCSQMGYLFMAVGLSQYNVALFHLVNHAFFKALLFLAAGAVIHGMADQQDLRRLGGLVNFLPFTYTAILIGSLSLMALPFMTGFYSKDLILEVALGQYEVSGTIAYWLGTISAVFTAFYSFRLVSLTFFTTPNAPKGDYLHAHEAPMIIVIPLVILSIMSIVFGYIAKDMFVGVGTDFLSTALFQHPDHITLIEAEFGLPLLMKLLPAIGSLFGAGLALYLYHVVPSITISLTNGPIGYGVYSFLNAKWYWDALYNGLIIESGLRIGLVISKVIDRGIIELTGPYGLSTVLTGAGRSVATYDTGVITSYALYIMLGLVSLIFLVFAPTNMVFNEYGLSLILVYLSALVLLPSSTRTS.

16 consecutive transmembrane segments (helical) span residues 40–62 (AALS…IVIG), 77–99 (LFDS…VHLY), 112–129 (RFFS…VLVA), 133–155 (YFIM…NFWY), 168–190 (LTVN…WVFG), 200–222 (VAPY…GAMA), 243–262 (VSAL…LMLR), 272–294 (TVLV…TGLL), 301–320 (VIAY…VGLS), 325–347 (ALFH…GAVI), 360–382 (GGLV…SLMA), 408–430 (TIAY…RLVS), 450–472 (APMI…GYIA), 510–529 (LLPA…LYHV), 609–631 (GVIT…LVFA), and 636–658 (VFNE…LPSS).

This sequence belongs to the complex I subunit 5 family.

The protein localises to the mitochondrion inner membrane. The enzyme catalyses a ubiquinone + NADH + 5 H(+)(in) = a ubiquinol + NAD(+) + 4 H(+)(out). Functionally, core subunit of the mitochondrial membrane respiratory chain NADH dehydrogenase (Complex I) that is believed to belong to the minimal assembly required for catalysis. Complex I functions in the transfer of electrons from NADH to the respiratory chain. The immediate electron acceptor for the enzyme is believed to be ubiquinone. The polypeptide is NADH-ubiquinone oxidoreductase chain 5 (ND5) (Cryptococcus neoformans var. grubii serotype A (strain H99 / ATCC 208821 / CBS 10515 / FGSC 9487) (Filobasidiella neoformans var. grubii)).